We begin with the raw amino-acid sequence, 152 residues long: Transcriptional regulator MraZ (152 aa).

SpoVT-AbrB domains lie at 5-52 (ASAI…PIHE) and 81-124 (AHEV…DEQS).

Belongs to the MraZ family. Forms oligomers.

Its subcellular location is the cytoplasm. It is found in the nucleoid. The polypeptide is Transcriptional regulator MraZ (Shewanella baltica (strain OS155 / ATCC BAA-1091)).